The sequence spans 178 residues: ATP synthase subunit delta (178 aa).

The protein belongs to the ATPase delta chain family. F-type ATPases have 2 components, F(1) - the catalytic core - and F(0) - the membrane proton channel. F(1) has five subunits: alpha(3), beta(3), gamma(1), delta(1), epsilon(1). F(0) has three main subunits: a(1), b(2) and c(10-14). The alpha and beta chains form an alternating ring which encloses part of the gamma chain. F(1) is attached to F(0) by a central stalk formed by the gamma and epsilon chains, while a peripheral stalk is formed by the delta and b chains.

The protein resides in the cell inner membrane. Its function is as follows. F(1)F(0) ATP synthase produces ATP from ADP in the presence of a proton or sodium gradient. F-type ATPases consist of two structural domains, F(1) containing the extramembraneous catalytic core and F(0) containing the membrane proton channel, linked together by a central stalk and a peripheral stalk. During catalysis, ATP synthesis in the catalytic domain of F(1) is coupled via a rotary mechanism of the central stalk subunits to proton translocation. This protein is part of the stalk that links CF(0) to CF(1). It either transmits conformational changes from CF(0) to CF(1) or is implicated in proton conduction. This chain is ATP synthase subunit delta, found in Acinetobacter baylyi (strain ATCC 33305 / BD413 / ADP1).